The following is a 65-amino-acid chain: ATP synthase F(0) complex subunit 8 (65 aa).

A helical membrane pass occupies residues 8–24; sequence TWLTTILSMFLALFIIF. Lys53 carries the post-translational modification N6-acetyllysine; alternate. Lys53 carries the N6-succinyllysine; alternate modification. Residue Lys56 is modified to N6-acetyllysine.

This sequence belongs to the ATPase protein 8 family. As to quaternary structure, component of the ATP synthase complex composed at least of ATP5F1A/subunit alpha, ATP5F1B/subunit beta, ATP5MC1/subunit c (homooctomer), MT-ATP6/subunit a, MT-ATP8/subunit 8, ATP5ME/subunit e, ATP5MF/subunit f, ATP5MG/subunit g, ATP5MK/subunit k, ATP5MJ/subunit j, ATP5F1C/subunit gamma, ATP5F1D/subunit delta, ATP5F1E/subunit epsilon, ATP5PF/subunit F6, ATP5PB/subunit b, ATP5PD/subunit d, ATP5PO/subunit OSCP. ATP synthase complex consists of a soluble F(1) head domain (subunits alpha(3) and beta(3)) - the catalytic core - and a membrane F(0) domain - the membrane proton channel (subunits c, a, 8, e, f, g, k and j). These two domains are linked by a central stalk (subunits gamma, delta, and epsilon) rotating inside the F1 region and a stationary peripheral stalk (subunits F6, b, d, and OSCP). Interacts with PRICKLE3.

It is found in the mitochondrion membrane. Subunit 8, of the mitochondrial membrane ATP synthase complex (F(1)F(0) ATP synthase or Complex V) that produces ATP from ADP in the presence of a proton gradient across the membrane which is generated by electron transport complexes of the respiratory chain. ATP synthase complex consist of a soluble F(1) head domain - the catalytic core - and a membrane F(1) domain - the membrane proton channel. These two domains are linked by a central stalk rotating inside the F(1) region and a stationary peripheral stalk. During catalysis, ATP synthesis in the catalytic domain of F(1) is coupled via a rotary mechanism of the central stalk subunits to proton translocation. In vivo, can only synthesize ATP although its ATP hydrolase activity can be activated artificially in vitro. Part of the complex F(0) domain. The sequence is that of ATP synthase F(0) complex subunit 8 from Capra ibex ibex (Alpine ibex).